Reading from the N-terminus, the 459-residue chain is Vacuolar cation/proton exchanger 3 (459 aa).

Residues 1-67 (MGSIVEPWAA…TLKNILSNLQ (67 aa)) lie on the Cytoplasmic side of the membrane. A helical membrane pass occupies residues 68–88 (EVILGTKLTLLFLAIPLAILA). Residues 89 to 95 (NSYNYGR) lie on the Extracellular side of the membrane. A helical transmembrane segment spans residues 96–116 (PLIFGLSLIGLTPLAERVSFL). At 117-129 (TEQLAFYTGPTVG) the chain is on the cytoplasmic side. The helical transmembrane segment at 130–150 (GLLNATCGNATELIIAILALA) threads the bilayer. The segment at 137 to 172 (GNATELIIAILALANNKVAVVKYSLLGSILSNLLLV) is cation selection. The Extracellular segment spans residues 151-161 (NNKVAVVKYSL). The chain crosses the membrane as a helical span at residues 162–182 (LGSILSNLLLVLGTSLFFGGI). Over 183–195 (ANIRREQRFDRKQ) the chain is Cytoplasmic. A helical membrane pass occupies residues 196-216 (ADVNFFLLLMGLLCHLLPLLL). Over 217 to 238 (KYAATGEVSTSMINKMSLTLSR) the chain is Extracellular. The chain crosses the membrane as a helical span at residues 239–259 (TSSIVMLIAYIAYLIFQLWTH). The Cytoplasmic portion of the chain corresponds to 260 to 283 (RQLFEAQQDDDDAYDDEVSVEETP). A helical transmembrane segment spans residues 284 to 304 (VIGFWSGFAWLVGMTIVIALL). Topologically, residues 305-327 (SEYVVDTIEDASDSWGLSVSFIS) are extracellular. Residues 328–348 (IILLPIVGNAAEHAGAIIFAF) form a helical membrane-spanning segment. The cation selection stretch occupies residues 335–370 (GNAAEHAGAIIFAFKNKLDISLGVALGSATQISLFV). Residues 349-362 (KNKLDISLGVALGS) are Cytoplasmic-facing. A helical membrane pass occupies residues 363–383 (ATQISLFVVPLSVIVAWILGI). At 384–386 (KMD) the chain is on the extracellular side. A helical membrane pass occupies residues 387-407 (LNFNILETSSLALAIIITAFT). Residues 408–417 (LQDGTSHYMK) lie on the Cytoplasmic side of the membrane. The chain crosses the membrane as a helical span at residues 418-438 (GLVLLLCYVIIAACFFVDQIP). The Extracellular portion of the chain corresponds to 439–459 (QPNDLDVGLQPMNNLGEVFSA).

The protein belongs to the Ca(2+):cation antiporter (CaCA) (TC 2.A.19) family. Cation/proton exchanger (CAX) subfamily. As to expression, expressed in roots, stems and flowers.

Its subcellular location is the vacuole membrane. Inhibited by excess of Ca(2+). Its function is as follows. Vacuolar cation/proton exchanger (CAX). Translocates Ca(2+) and other metal ions into vacuoles using the proton gradient formed by H(+)-ATPase and H(+)-pyrophosphatase. Involved in ion homeostasis in association with CAX1. This chain is Vacuolar cation/proton exchanger 3 (CAX3), found in Arabidopsis thaliana (Mouse-ear cress).